We begin with the raw amino-acid sequence, 89 residues long: Cell division topological specificity factor (89 aa).

It belongs to the MinE family.

In terms of biological role, prevents the cell division inhibition by proteins MinC and MinD at internal division sites while permitting inhibition at polar sites. This ensures cell division at the proper site by restricting the formation of a division septum at the midpoint of the long axis of the cell. In Heliobacterium modesticaldum (strain ATCC 51547 / Ice1), this protein is Cell division topological specificity factor.